A 224-amino-acid chain; its full sequence is tRNA (guanine-N(7)-)-methyltransferase (224 aa).

S-adenosyl-L-methionine contacts are provided by Glu-45, Glu-70, Asp-97, and Asp-119. The active site involves Asp-119. Residues Lys-123, Asp-155, and 199 to 202 (TEYE) each bind substrate.

The protein belongs to the class I-like SAM-binding methyltransferase superfamily. TrmB family.

It catalyses the reaction guanosine(46) in tRNA + S-adenosyl-L-methionine = N(7)-methylguanosine(46) in tRNA + S-adenosyl-L-homocysteine. Its pathway is tRNA modification; N(7)-methylguanine-tRNA biosynthesis. Functionally, catalyzes the formation of N(7)-methylguanine at position 46 (m7G46) in tRNA. This is tRNA (guanine-N(7)-)-methyltransferase from Ureaplasma parvum serovar 3 (strain ATCC 27815 / 27 / NCTC 11736).